The following is a 359-amino-acid chain: Fructose-bisphosphate aldolase (359 aa).

Ser-50 is a binding site for D-glyceraldehyde 3-phosphate. Catalysis depends on Asp-83, which acts as the Proton donor. 4 residues coordinate Zn(2+): His-84, Asp-105, Glu-142, and His-198. Residue Gly-199 coordinates dihydroxyacetone phosphate. Zn(2+) is bound at residue His-232. Dihydroxyacetone phosphate contacts are provided by residues 233–235 and 275–278; these read GSS and NIDT.

It belongs to the class II fructose-bisphosphate aldolase family. The cofactor is Zn(2+).

The enzyme catalyses beta-D-fructose 1,6-bisphosphate = D-glyceraldehyde 3-phosphate + dihydroxyacetone phosphate. It functions in the pathway carbohydrate degradation; glycolysis; D-glyceraldehyde 3-phosphate and glycerone phosphate from D-glucose: step 4/4. Its function is as follows. Catalyzes the aldol condensation of dihydroxyacetone phosphate (DHAP or glycerone-phosphate) with glyceraldehyde 3-phosphate (G3P) to form fructose 1,6-bisphosphate (FBP) in gluconeogenesis and the reverse reaction in glycolysis. This is Fructose-bisphosphate aldolase (fba) from Nostoc commune.